The sequence spans 373 residues: Chaperone protein DnaJ (373 aa).

The region spanning 4-69 (SYYEILEITQ…EKRAIYDRYG (66 aa)) is the J domain. Residues 135–212 (GCKKNIDFTY…CKGLGYNESK (78 aa)) form a CR-type zinc finger. Cys148, Cys151, Cys164, Cys167, Cys186, Cys189, Cys200, and Cys203 together coordinate Zn(2+). CXXCXGXG motif repeat units lie at residues 148 to 155 (CKTCNGTG), 164 to 171 (CPKCQGRG), 186 to 193 (CPDCQGIG), and 200 to 207 (CSDCKGLG).

This sequence belongs to the DnaJ family. Homodimer. It depends on Zn(2+) as a cofactor.

The protein localises to the cytoplasm. Participates actively in the response to hyperosmotic and heat shock by preventing the aggregation of stress-denatured proteins and by disaggregating proteins, also in an autonomous, DnaK-independent fashion. Unfolded proteins bind initially to DnaJ; upon interaction with the DnaJ-bound protein, DnaK hydrolyzes its bound ATP, resulting in the formation of a stable complex. GrpE releases ADP from DnaK; ATP binding to DnaK triggers the release of the substrate protein, thus completing the reaction cycle. Several rounds of ATP-dependent interactions between DnaJ, DnaK and GrpE are required for fully efficient folding. Also involved, together with DnaK and GrpE, in the DNA replication of plasmids through activation of initiation proteins. The protein is Chaperone protein DnaJ of Campylobacter jejuni subsp. jejuni serotype O:2 (strain ATCC 700819 / NCTC 11168).